Consider the following 580-residue polypeptide: Glutamine--tRNA ligase (580 aa).

A 'HIGH' region motif is present at residues 41 to 51; it reads PEPNGYLHIGH. ATP contacts are provided by residues 42 to 44 and 48 to 54; these read EPN and HIGHAKA. The L-glutamine site is built by Asp74 and Tyr218. ATP is bound by residues Thr237, 285-286, and 293-295; these read RL and MSK. The 'KMSKS' region motif lies at 292-296; sequence VMSKR.

This sequence belongs to the class-I aminoacyl-tRNA synthetase family. Monomer.

Its subcellular location is the cytoplasm. It carries out the reaction tRNA(Gln) + L-glutamine + ATP = L-glutaminyl-tRNA(Gln) + AMP + diphosphate. The sequence is that of Glutamine--tRNA ligase from Xylella fastidiosa (strain 9a5c).